The following is a 176-amino-acid chain: Ribosome rescue factor SmrB (176 aa).

The disordered stretch occupies residues 29–51 (TIIQQPKKNTKQKEIKRSNREAS). Positions 39–51 (KQKEIKRSNREAS) are enriched in basic and acidic residues. The Smr domain maps to 97–172 (LDMHGMTQQE…GDGALLVLLS (76 aa)).

Belongs to the SmrB family. In terms of assembly, associates with collided ribosomes, but not with correctly translating polysomes.

Its function is as follows. Acts as a ribosome collision sensor. Detects stalled/collided disomes (pairs of ribosomes where the leading ribosome is stalled and a second ribosome has collided with it) and endonucleolytically cleaves mRNA at the 5' boundary of the stalled ribosome. Stalled/collided disomes form a new interface (primarily via the 30S subunits) that binds SmrB. Cleaved mRNA becomes available for tmRNA ligation, leading to ribosomal subunit dissociation and rescue of stalled ribosomes. The protein is Ribosome rescue factor SmrB of Vibrio parahaemolyticus serotype O3:K6 (strain RIMD 2210633).